Here is a 336-residue protein sequence, read N- to C-terminus: Ferrochelatase (336 aa).

His206 and Glu287 together coordinate Fe cation.

The protein belongs to the ferrochelatase family.

The protein localises to the cytoplasm. It catalyses the reaction heme b + 2 H(+) = protoporphyrin IX + Fe(2+). It participates in porphyrin-containing compound metabolism; protoheme biosynthesis; protoheme from protoporphyrin-IX: step 1/1. Its function is as follows. Catalyzes the ferrous insertion into protoporphyrin IX. This Neisseria meningitidis serogroup C / serotype 2a (strain ATCC 700532 / DSM 15464 / FAM18) protein is Ferrochelatase.